The chain runs to 76 residues: Heat shock factor-binding protein 1 (76 aa).

The protein belongs to the HSBP1 family. Homohexamer. Associates with heptad repeats of HSF1 trimers and probably also HSF1 monomers, and with HSP70. Association with HSF1 trimers and HSP70 coincides with attenuation of heat shock response and the conversion of HSF1 trimer to monomer.

It localises to the nucleus. Functionally, negative regulator of the heat shock response. Negatively affects HSF1 DNA-binding activity. May have a role in the suppression of the activation of the stress response during the aging process. This is Heat shock factor-binding protein 1 (HSBP1) from Bos taurus (Bovine).